The primary structure comprises 212 residues: Small ribosomal subunit protein uS4c (212 aa).

The S4 RNA-binding domain maps to 89-152; that stretch reads MRLDNIIFRL…RSRALVDKNL (64 aa).

Belongs to the universal ribosomal protein uS4 family. Part of the 30S ribosomal subunit. Contacts protein S5. The interaction surface between S4 and S5 is involved in control of translational fidelity.

It localises to the plastid. The protein resides in the chloroplast. In terms of biological role, one of the primary rRNA binding proteins, it binds directly to 16S rRNA where it nucleates assembly of the body of the 30S subunit. Its function is as follows. With S5 and S12 plays an important role in translational accuracy. In Staurastrum punctulatum (Green alga), this protein is Small ribosomal subunit protein uS4c (rps4).